The sequence spans 239 residues: TPR repeat-containing protein TP_0282 (239 aa).

The helical transmembrane segment at 21-43 threads the bilayer; it reads LLVGVLVAILGGLGLSAGCLLVM. TPR repeat units lie at residues 112 to 145 and 149 to 182; these read AYAQ…ARRS and GVYY…QDFP.

The protein localises to the cell membrane. The sequence is that of TPR repeat-containing protein TP_0282 from Treponema pallidum (strain Nichols).